The following is a 231-amino-acid chain: 2-C-methyl-D-erythritol 4-phosphate cytidylyltransferase (231 aa).

This sequence belongs to the IspD/TarI cytidylyltransferase family. IspD subfamily.

It carries out the reaction 2-C-methyl-D-erythritol 4-phosphate + CTP + H(+) = 4-CDP-2-C-methyl-D-erythritol + diphosphate. It functions in the pathway isoprenoid biosynthesis; isopentenyl diphosphate biosynthesis via DXP pathway; isopentenyl diphosphate from 1-deoxy-D-xylulose 5-phosphate: step 2/6. Catalyzes the formation of 4-diphosphocytidyl-2-C-methyl-D-erythritol from CTP and 2-C-methyl-D-erythritol 4-phosphate (MEP). The chain is 2-C-methyl-D-erythritol 4-phosphate cytidylyltransferase from Clostridium novyi (strain NT).